The following is a 270-amino-acid chain: Regulatory protein RecX (270 aa).

It belongs to the RecX family.

Its subcellular location is the cytoplasm. Its function is as follows. Modulates RecA activity. The polypeptide is Regulatory protein RecX (Bacillus anthracis (strain A0248)).